The sequence spans 573 residues: Solute carrier family 41 member 2 (573 aa).

At 1 to 162 (MTNCKGRSTI…KESSSIMALQ (162 aa)) the chain is on the extracellular side. Residues 163–183 (ILVPFLLAGFGTVTAGMVLDI) traverse the membrane as a helical segment. Residues 184-195 (VQHWDVFKNVTE) lie on the Cytoplasmic side of the membrane. The helical transmembrane segment at 196-216 (VFILVPALLGLKGNLEMTLAS) threads the bilayer. The Extracellular segment spans residues 217-245 (RLSTAVNIGKMDSPIEKWNLIIGNLALKQ). A helical membrane pass occupies residues 246-266 (VQATVVGFLAAVAAVILGWIP). The Cytoplasmic portion of the chain corresponds to 267 to 282 (EGKYSFSHSILLCSSS). The chain crosses the membrane as a helical span at residues 283–303 (VATAFIASLLQGIIMVGVIVG). At 304 to 313 (SKKTGINPDN) the chain is on the extracellular side. Residues 314 to 334 (VATPIAASFGDLITLAILAWI) form a helical membrane-spanning segment. At 335-347 (SQGLYTCLETYYY) the chain is on the cytoplasmic side. Residues 348–368 (VSPLVGAFFLALTPMGIVIAA) traverse the membrane as a helical segment. Topologically, residues 369–376 (KHPATRTV) are extracellular. Residues 377 to 397 (LHSGWEPVITAMIISSIGGLI) traverse the membrane as a helical segment. The Cytoplasmic portion of the chain corresponds to 398 to 406 (LDTTVSDPN). A helical transmembrane segment spans residues 407–427 (LVGIVVYTPVINGIGGNLVAI). Residues 428–469 (QASRISTYLHLHSIPGELPEEAKGCYYPCRTYYGTGVNNKSA) lie on the Extracellular side of the membrane. The chain crosses the membrane as a helical span at residues 470–490 (QVLLLLVIPGHLIFLYTIHLM). Residues 491-499 (KSGHTSLTP) lie on the Cytoplasmic side of the membrane. Residues 500–520 (IFIAVYLFAALLQVFTLLWIA) form a helical membrane-spanning segment. Topologically, residues 521–543 (DWMVHHFWKKGKDPDSFSIPYLT) are extracellular. A helical membrane pass occupies residues 544–564 (ALGDLLGTALLAVGFHFLWLI). Residues 565 to 573 (GDRDGDVGD) are Cytoplasmic-facing.

This sequence belongs to the SLC41A transporter family.

It localises to the cell membrane. The catalysed reaction is Mg(2+)(in) = Mg(2+)(out). It catalyses the reaction Mn(2+)(in) = Mn(2+)(out). It carries out the reaction Co(2+)(in) = Co(2+)(out). The enzyme catalyses Ni(2+)(in) = Ni(2+)(out). The catalysed reaction is Fe(2+)(in) = Fe(2+)(out). In terms of biological role, acts as a plasma-membrane magnesium transporter. Can also mediate the transport of other divalent metal cations in an order of Ba(2+) &gt; Ni(2+) &gt; Co(2+) &gt; Fe(2+) &gt; Mn(2+). The sequence is that of Solute carrier family 41 member 2 (SLC41A2) from Gallus gallus (Chicken).